A 565-amino-acid polypeptide reads, in one-letter code: Sulfite reductase [NADPH] hemoprotein beta-component (565 aa).

[4Fe-4S] cluster contacts are provided by C429, C435, C474, and C478. C478 lines the siroheme pocket.

The protein belongs to the nitrite and sulfite reductase 4Fe-4S domain family. As to quaternary structure, alpha(8)-beta(8). The alpha component is a flavoprotein, the beta component is a hemoprotein. Siroheme is required as a cofactor. [4Fe-4S] cluster serves as cofactor.

It catalyses the reaction hydrogen sulfide + 3 NADP(+) + 3 H2O = sulfite + 3 NADPH + 4 H(+). It participates in sulfur metabolism; hydrogen sulfide biosynthesis; hydrogen sulfide from sulfite (NADPH route): step 1/1. In terms of biological role, component of the sulfite reductase complex that catalyzes the 6-electron reduction of sulfite to sulfide. This is one of several activities required for the biosynthesis of L-cysteine from sulfate. This is Sulfite reductase [NADPH] hemoprotein beta-component from Shewanella baltica (strain OS185).